The primary structure comprises 97 residues: Large ribosomal subunit protein uL23 (97 aa).

This sequence belongs to the universal ribosomal protein uL23 family. In terms of assembly, part of the 50S ribosomal subunit. Contacts protein L29, and trigger factor when it is bound to the ribosome.

Its function is as follows. One of the early assembly proteins it binds 23S rRNA. One of the proteins that surrounds the polypeptide exit tunnel on the outside of the ribosome. Forms the main docking site for trigger factor binding to the ribosome. The sequence is that of Large ribosomal subunit protein uL23 from Clostridium botulinum (strain ATCC 19397 / Type A).